The chain runs to 159 residues: Phosphopantetheine adenylyltransferase (159 aa).

Residue Thr-9 participates in substrate binding. Residues 9 to 10 and His-17 each bind ATP; that span reads TF. Positions 41, 73, and 87 each coordinate substrate. ATP-binding positions include 88-90, Glu-98, and 123-129; these read GLR and YAFLSST.

The protein belongs to the bacterial CoaD family. Homohexamer. The cofactor is Mg(2+).

It localises to the cytoplasm. It carries out the reaction (R)-4'-phosphopantetheine + ATP + H(+) = 3'-dephospho-CoA + diphosphate. It functions in the pathway cofactor biosynthesis; coenzyme A biosynthesis; CoA from (R)-pantothenate: step 4/5. Functionally, reversibly transfers an adenylyl group from ATP to 4'-phosphopantetheine, yielding dephospho-CoA (dPCoA) and pyrophosphate. The polypeptide is Phosphopantetheine adenylyltransferase (Vibrio campbellii (strain ATCC BAA-1116)).